A 365-amino-acid chain; its full sequence is 3-dehydroquinate synthase (365 aa).

NAD(+)-binding positions include 107–111 (GVIGD), 131–132 (TT), K144, and K153. The Zn(2+) site is built by E186, H251, and H268.

This sequence belongs to the sugar phosphate cyclases superfamily. Dehydroquinate synthase family. It depends on Co(2+) as a cofactor. Requires Zn(2+) as cofactor. NAD(+) serves as cofactor.

It localises to the cytoplasm. It catalyses the reaction 7-phospho-2-dehydro-3-deoxy-D-arabino-heptonate = 3-dehydroquinate + phosphate. Its pathway is metabolic intermediate biosynthesis; chorismate biosynthesis; chorismate from D-erythrose 4-phosphate and phosphoenolpyruvate: step 2/7. Functionally, catalyzes the conversion of 3-deoxy-D-arabino-heptulosonate 7-phosphate (DAHP) to dehydroquinate (DHQ). This chain is 3-dehydroquinate synthase, found in Picosynechococcus sp. (strain ATCC 27264 / PCC 7002 / PR-6) (Agmenellum quadruplicatum).